The following is a 367-amino-acid chain: Peptide chain release factor 2 (367 aa).

Q254 is subject to N5-methylglutamine.

The protein belongs to the prokaryotic/mitochondrial release factor family. Methylated by PrmC. Methylation increases the termination efficiency of RF2.

Its subcellular location is the cytoplasm. Functionally, peptide chain release factor 2 directs the termination of translation in response to the peptide chain termination codons UGA and UAA. The chain is Peptide chain release factor 2 from Leptospira borgpetersenii serovar Hardjo-bovis (strain JB197).